A 117-amino-acid chain; its full sequence is MDKKTARLSRSKRTRIKLRELGHTRLCVYRTPRHVYAQVISGDGSTVLVAASTVEKDVKAKCKYTGNVESAAIVGEIIANRCKEKGISQVAFDRSGYKYHGRVKALAEAAREHGLQF.

This sequence belongs to the universal ribosomal protein uL18 family. As to quaternary structure, part of the 50S ribosomal subunit; part of the 5S rRNA/L5/L18/L25 subcomplex. Contacts the 5S and 23S rRNAs.

Functionally, this is one of the proteins that bind and probably mediate the attachment of the 5S RNA into the large ribosomal subunit, where it forms part of the central protuberance. This Francisella tularensis subsp. novicida (strain U112) protein is Large ribosomal subunit protein uL18.